Reading from the N-terminus, the 345-residue chain is Heat-inducible transcription repressor HrcA (345 aa).

The protein belongs to the HrcA family.

Its function is as follows. Negative regulator of class I heat shock genes (grpE-dnaK-dnaJ and groELS operons). Prevents heat-shock induction of these operons. This chain is Heat-inducible transcription repressor HrcA, found in Listeria welshimeri serovar 6b (strain ATCC 35897 / DSM 20650 / CCUG 15529 / CIP 8149 / NCTC 11857 / SLCC 5334 / V8).